Reading from the N-terminus, the 647-residue chain is MVSDGQVFPVPADLARDAHIDAAAYDAALARVEADPEGYWRDIAARLDWITPPTKIKDVSYAKEDFRIRWYEDGVLNVSANCIDRHLPAKKDDVALVFEGDEPGTSSTLTYGQLHEEVCRMANVLKAQGVKKGDRVTIYLPMVPLAAVAMLACARIGAVHSVVFGGFSPDSIAGRIQDCASHFVITADEGRRGGRRVPLKANIDEALKHCPWVGKVLMIRWTGADVPLKAGRDIVWQDVRDTVSADCPPEPMNAEDPLFILYTSGSTGKPKGVLHTTGGYLAWASWTFWAVFDYKPGEVFWCTADVGWVTGHSYVVYGPLANGGTSLIFEGVPNYPTPSRFWEVIDKHQVSIFYTAPTALRALMREGDAHVTKNDLSSLRLLGSVGEPINPEAWLWYHRVVGKEKLPIVDTWWQTETGGMLITPLPGATALKPGSASKPLPGVKPQLVDAEGKFLDGATEGNLVITDSWPGQMRTVYGDHQRFFETYFSTYPGKYFTGDGCRRDADGYYWITGRVDDVINVSGHRLGTAEIESALVAHETVAEAAVVGYPHDIKGQGVYAYVTLKAGIEATDALRKDLVLWVRHEIGPFAAPDVIQWAPGLPKTRSGKIMRRILRKIAENELGSLGDTSTLADPSVVDDLVKNRAGT.

CoA-binding positions include 192-195 (RGGR), Thr310, and Asn334. Residues 386–388 (GEP), 410–415 (DTWWQT), Asp499, and Arg514 contribute to the ATP site. Ser522 provides a ligand contact to CoA. Arg525 serves as a coordination point for ATP. Val536, His538, and Val541 together coordinate Mg(2+). A CoA-binding site is contributed by Arg583. Lys608 carries the N6-acetyllysine modification.

Belongs to the ATP-dependent AMP-binding enzyme family. The cofactor is Mg(2+). In terms of processing, acetylated. Deacetylation by the SIR2-homolog deacetylase activates the enzyme.

The catalysed reaction is acetate + ATP + CoA = acetyl-CoA + AMP + diphosphate. Its function is as follows. Catalyzes the conversion of acetate into acetyl-CoA (AcCoA), an essential intermediate at the junction of anabolic and catabolic pathways. AcsA undergoes a two-step reaction. In the first half reaction, AcsA combines acetate with ATP to form acetyl-adenylate (AcAMP) intermediate. In the second half reaction, it can then transfer the acetyl group from AcAMP to the sulfhydryl group of CoA, forming the product AcCoA. The protein is Acetyl-coenzyme A synthetase of Caulobacter vibrioides (strain ATCC 19089 / CIP 103742 / CB 15) (Caulobacter crescentus).